The primary structure comprises 299 residues: 4-diphosphocytidyl-2-C-methyl-D-erythritol kinase (299 aa).

Lys-20 is a catalytic residue. 106–116 (PMGGGLGGGSS) lines the ATP pocket. Asp-148 is a catalytic residue.

The protein belongs to the GHMP kinase family. IspE subfamily. As to quaternary structure, homodimer.

The enzyme catalyses 4-CDP-2-C-methyl-D-erythritol + ATP = 4-CDP-2-C-methyl-D-erythritol 2-phosphate + ADP + H(+). Its pathway is isoprenoid biosynthesis; isopentenyl diphosphate biosynthesis via DXP pathway; isopentenyl diphosphate from 1-deoxy-D-xylulose 5-phosphate: step 3/6. Its function is as follows. Catalyzes the phosphorylation of the position 2 hydroxy group of 4-diphosphocytidyl-2C-methyl-D-erythritol. The protein is 4-diphosphocytidyl-2-C-methyl-D-erythritol kinase of Yersinia pseudotuberculosis serotype O:1b (strain IP 31758).